The following is a 101-amino-acid chain: Hg-scorpine-like-2 (101 aa).

Positions 1-17 (MKLTILILLVITSFCSC) are cleaved as a signal peptide. Positions 60–100 (QQLCMFNKDVAGWCEKSCQQSAHQKGYCHGTKCKCGIPLNY) constitute a BetaSPN-type CS-alpha/beta domain. Intrachain disulfides connect C63-C87, C73-C92, and C77-C94.

It belongs to the long chain scorpion toxin family. Class 3 subfamily. As to expression, expressed by the venom gland.

The protein resides in the secreted. Inhibits voltage-gated potassium channels. The chain is Hg-scorpine-like-2 from Hoffmannihadrurus gertschi (Scorpion).